A 570-amino-acid chain; its full sequence is MPHETLLDNQGWFKKLARRFGPGHVVNTCFLIVMLFSTLLTWREVMILKDAYVASQRNHLGSVANVLDRQLQFNMDRLIFLRNGMHEALVAPLAFSALQSAVTQFEQRRVRHFWQLELDKRRTLPLYGVSDQFVARTTLLSRESRDLANELTATLELGYLARLARSSAMLTLETMYVSCSGFYLSTLPTAYGSDIVSRYYQYVTQPWFIEQSQRRNPQRGVRWFTSAQPYVADEQKKVTASLPLDHDNYWYGVLAMDIPVASLQRFLRDAAEKDIEGEYQLYDNHLRLLTDSAPEQQTANTLNDRERALLAREIEKDTLGGLRLGTHYVSWERLDHFDGVLLRVHTLREGIQGNFGSISIALTLLWVLFTAMLLISWGVIRHMVKNMFVLQNSLQWQAWHDPLTRLYNRGALFEKASRLAKRYREARQPFSVIQLDLDYFKSVNDRFGHQAGDRVLSHAAGLIGSTIRAHDIAGRVGGEEFCIVLPGATKAQALQIAERIRQRINDKEILVTKSTTLRISASMGISSAEEYGDYDFEQLQSLADKRLYYAKQSGRNRICASDATQEREKK.

2 consecutive transmembrane segments (helical) span residues 20–40 (FGPG…STLL) and 360–380 (IALT…WGVI). Residues 428–563 (QPFSVIQLDL…GRNRICASDA (136 aa)) form the GGDEF domain. Aspartate 436 lines the Mg(2+) pocket. Substrate is bound by residues asparagine 444, histidine 449, and aspartate 453. Residue glutamate 479 coordinates Mg(2+). Glutamate 479 (proton acceptor) is an active-site residue.

In terms of assembly, homodimer. Mg(2+) serves as cofactor.

It is found in the cell inner membrane. It catalyses the reaction 2 GTP = 3',3'-c-di-GMP + 2 diphosphate. It participates in glycan metabolism; bacterial cellulose biosynthesis. Its pathway is purine metabolism; 3',5'-cyclic di-GMP biosynthesis. Functionally, catalyzes the synthesis of cyclic-di-GMP (c-di-GMP) via the condensation of 2 GTP molecules. Cyclic-di-GMP is a second messenger which controls cell surface-associated traits in bacteria. Involved in the regulation of cellulose production. This is Probable diguanylate cyclase DgcQ from Salmonella choleraesuis (strain SC-B67).